The following is a 159-amino-acid chain: 2-C-methyl-D-erythritol 2,4-cyclodiphosphate synthase (159 aa).

Residues aspartate 8 and histidine 10 each coordinate a divalent metal cation. 4-CDP-2-C-methyl-D-erythritol 2-phosphate is bound by residues 8 to 10 and 34 to 35; these read DVH and HS. Position 42 (histidine 42) interacts with a divalent metal cation. Residues 56-58, 61-65, 100-106, 132-135, phenylalanine 139, and arginine 142 contribute to the 4-CDP-2-C-methyl-D-erythritol 2-phosphate site; these read DIG, FPDTD, AQAPKML, and TTTE.

It belongs to the IspF family. In terms of assembly, homotrimer. It depends on a divalent metal cation as a cofactor.

It catalyses the reaction 4-CDP-2-C-methyl-D-erythritol 2-phosphate = 2-C-methyl-D-erythritol 2,4-cyclic diphosphate + CMP. It participates in isoprenoid biosynthesis; isopentenyl diphosphate biosynthesis via DXP pathway; isopentenyl diphosphate from 1-deoxy-D-xylulose 5-phosphate: step 4/6. Functionally, involved in the biosynthesis of isopentenyl diphosphate (IPP) and dimethylallyl diphosphate (DMAPP), two major building blocks of isoprenoid compounds. Catalyzes the conversion of 4-diphosphocytidyl-2-C-methyl-D-erythritol 2-phosphate (CDP-ME2P) to 2-C-methyl-D-erythritol 2,4-cyclodiphosphate (ME-CPP) with a corresponding release of cytidine 5-monophosphate (CMP). This chain is 2-C-methyl-D-erythritol 2,4-cyclodiphosphate synthase, found in Citrobacter koseri (strain ATCC BAA-895 / CDC 4225-83 / SGSC4696).